The chain runs to 498 residues: Dynein regulatory complex subunit 2 (498 aa).

Coiled coils occupy residues 98-160 (VIKS…RKTI), 250-311 (KDEK…KAQR), and 417-441 (SLRH…QYLD).

The protein belongs to the DRC2 family. In terms of assembly, component of the nexin-dynein regulatory complex (N-DRC). Interacts with DRC1.

The protein localises to the cytoplasm. Its subcellular location is the cytoskeleton. The protein resides in the flagellum basal body. It is found in the cell projection. It localises to the cilium. The protein localises to the flagellum. Its subcellular location is the flagellum axoneme. In terms of biological role, component of the nexin-dynein regulatory complex (N-DRC), a key regulator of ciliary/flagellar motility which maintains the alignment and integrity of the distal axoneme and regulates microtubule sliding in motile axonemes. Plays a critical role in the assembly of N-DRC and also stabilizes the assembly of multiple inner dynein arms and radial spokes. Coassembles with DRC1 to form a central scaffold needed for assembly of the N-DRC and its attachment to the outer doublet microtubules. This chain is Dynein regulatory complex subunit 2 (CCDC65), found in Bos taurus (Bovine).